The sequence spans 442 residues: Protein PRRC1-B (442 aa).

Residues 1–24 (MMEESGIETTPPSTPPPSTIGTSV) are disordered.

Belongs to the PRRC1 family.

The protein resides in the golgi apparatus. The chain is Protein PRRC1-B (prrc1-b) from Xenopus laevis (African clawed frog).